The chain runs to 312 residues: Glyoxylate/hydroxypyruvate reductase A (312 aa).

Arginine 227 is a catalytic residue. Histidine 275 serves as the catalytic Proton donor.

This sequence belongs to the D-isomer specific 2-hydroxyacid dehydrogenase family. GhrA subfamily.

It localises to the cytoplasm. It catalyses the reaction glycolate + NADP(+) = glyoxylate + NADPH + H(+). The enzyme catalyses (R)-glycerate + NAD(+) = 3-hydroxypyruvate + NADH + H(+). It carries out the reaction (R)-glycerate + NADP(+) = 3-hydroxypyruvate + NADPH + H(+). Catalyzes the NADPH-dependent reduction of glyoxylate and hydroxypyruvate into glycolate and glycerate, respectively. This Klebsiella pneumoniae subsp. pneumoniae (strain ATCC 700721 / MGH 78578) protein is Glyoxylate/hydroxypyruvate reductase A.